We begin with the raw amino-acid sequence, 189 residues long: ATP synthase subunit b (189 aa).

Residues 23-43 (IEIVLSLVVFGLLLFAVWKFV) form a helical membrane-spanning segment.

This sequence belongs to the ATPase B chain family. F-type ATPases have 2 components, F(1) - the catalytic core - and F(0) - the membrane proton channel. F(1) has five subunits: alpha(3), beta(3), gamma(1), delta(1), epsilon(1). F(0) has three main subunits: a(1), b(2) and c(10-14). The alpha and beta chains form an alternating ring which encloses part of the gamma chain. F(1) is attached to F(0) by a central stalk formed by the gamma and epsilon chains, while a peripheral stalk is formed by the delta and b chains.

Its subcellular location is the cell membrane. Functionally, f(1)F(0) ATP synthase produces ATP from ADP in the presence of a proton or sodium gradient. F-type ATPases consist of two structural domains, F(1) containing the extramembraneous catalytic core and F(0) containing the membrane proton channel, linked together by a central stalk and a peripheral stalk. During catalysis, ATP synthesis in the catalytic domain of F(1) is coupled via a rotary mechanism of the central stalk subunits to proton translocation. In terms of biological role, component of the F(0) channel, it forms part of the peripheral stalk, linking F(1) to F(0). This chain is ATP synthase subunit b, found in Nocardioides sp. (strain ATCC BAA-499 / JS614).